The chain runs to 199 residues: Recombination protein RecR (199 aa).

The C4-type zinc finger occupies 57 to 72 (CQSCRTYTEESLCPIC). One can recognise a Toprim domain in the interval 81–176 (STICVVETPA…VISRIAHGVP (96 aa)).

Belongs to the RecR family.

Its function is as follows. May play a role in DNA repair. It seems to be involved in an RecBC-independent recombinational process of DNA repair. It may act with RecF and RecO. The chain is Recombination protein RecR from Shewanella sp. (strain ANA-3).